We begin with the raw amino-acid sequence, 142 residues long: Large ribosomal subunit protein uL13 (142 aa).

This sequence belongs to the universal ribosomal protein uL13 family. In terms of assembly, part of the 50S ribosomal subunit.

This protein is one of the early assembly proteins of the 50S ribosomal subunit, although it is not seen to bind rRNA by itself. It is important during the early stages of 50S assembly. The chain is Large ribosomal subunit protein uL13 from Vesicomyosocius okutanii subsp. Calyptogena okutanii (strain HA).